The primary structure comprises 664 residues: Tripartite terminase subunit 1 (664 aa).

Residues 205-233 (CHVCFEELCVTANQGATASRRLAGKICDH) form a C3H1-type zinc finger. Disordered stretches follow at residues 273-295 (SKMT…AQER) and 440-466 (HAAE…GGPE). Positions 281–292 (GGPAEAPGPAAA) are enriched in low complexity.

This sequence belongs to the herpesviridae TRM1 protein family. As to quaternary structure, associates with TRM2 and TRM3 to form the tripartite terminase complex. Interacts with portal protein.

It is found in the host nucleus. Its function is as follows. Component of the molecular motor that translocates viral genomic DNA in empty capsid during DNA packaging. Forms a tripartite terminase complex together with TRM2 and TRM3 in the host cytoplasm. Once the complex reaches the host nucleus, it interacts with the capsid portal vertex. This portal forms a ring in which genomic DNA is translocated into the capsid. TRM1 carries an endonuclease activity that plays an important role for the cleavage of concatemeric viral DNA into unit length genomes. The protein is Tripartite terminase subunit 1 of Bos taurus (Bovine).